We begin with the raw amino-acid sequence, 285 residues long: Nucleotide-binding protein GSU1884 (285 aa).

Residue 8–15 (GLSGSGKS) coordinates ATP. 59-62 (DIRG) serves as a coordination point for GTP.

This sequence belongs to the RapZ-like family.

Its function is as follows. Displays ATPase and GTPase activities. This chain is Nucleotide-binding protein GSU1884, found in Geobacter sulfurreducens (strain ATCC 51573 / DSM 12127 / PCA).